Here is a 153-residue protein sequence, read N- to C-terminus: Pheromone-binding protein Gp-9 (153 aa).

A signal peptide spans 1-19 (MKTFVLHIFIFALVAFASA). 3 cysteine pairs are disulfide-bonded: Cys-37–Cys-77, Cys-73–Cys-129, and Cys-118–Cys-138.

It belongs to the PBP/GOBP family. In terms of assembly, homodimer.

The protein localises to the secreted. Functionally, colony queen number, a major feature of social organization, is associated with worker genotype for Gp-9. Colonies are headed by either a single reproductive queen (monogyne form) or multiple queens (polygyne form). Differences in worker Gp-9 genotypes between social forms may cause differences in workers' abilities to recognize queens and regulate their numbers. This Solenopsis sp. (strain B0-153) (Fire ant) protein is Pheromone-binding protein Gp-9.